A 483-amino-acid polypeptide reads, in one-letter code: ATP-dependent RNA helicase DDX25 (483 aa).

Positions leucine 61–serine 74 match the Nuclear export signal motif. Residues lysine 97–glutamate 125 carry the Q motif motif. A Nuclear localization signal motif is present at residues glutamate 100–alanine 114. One can recognise a Helicase ATP-binding domain in the interval methionine 130–isoleucine 300. Serine 143–threonine 150 serves as a coordination point for ATP. A DEAD box motif is present at residues aspartate 247–aspartate 250. A Helicase C-terminal domain is found at asparagine 311–isoleucine 478.

The protein belongs to the DEAD box helicase family. In terms of processing, phosphorylated on threonine residues. The phosphorylated form is found in the cytoplasm but not in the nucleus.

It is found in the cytoplasm. It localises to the nucleus. The enzyme catalyses ATP + H2O = ADP + phosphate + H(+). In terms of biological role, ATP-dependent RNA helicase. Required for mRNA export and translation regulation during spermatid development. The polypeptide is ATP-dependent RNA helicase DDX25 (DDX25) (Bos taurus (Bovine)).